Consider the following 247-residue polypeptide: T-cell surface glycoprotein CD8 alpha chain (247 aa).

The first 27 residues, 1–27 (MASPLTRFLSLNLLLLGESIILGSGEA), serve as a signal peptide directing secretion. The Ig-like V-type domain maps to 28–139 (KPQAPELRIF…SVISNSVMYF (112 aa)). The Extracellular segment spans residues 28–196 (KPQAPELRIF…TGLDFACDIY (169 aa)). An intrachain disulfide couples C53 to C129. N-linked (GlcNAc...) asparagine glycans are attached at residues N69, N97, and N150. The interval 156–182 (PVLRTPSPVHPTGTSQPQRPEDCRPRG) is disordered. Residues 197-217 (IWAPLAGICVALLLSLIITLI) form a helical membrane-spanning segment. Topologically, residues 218-247 (CYHRSRKRVCKCPRPLVRQEGKPRPSEKIV) are cytoplasmic.

In terms of assembly, forms disulfide-linked heterodimers with CD8B at the cell surface. Also forms homodimers in several cell types including NK-cells or peripheral blood T-lymphocytes. Interacts with the MHC class I HLA-A/B2M dimer. Interacts with LCK in a zinc-dependent manner. In terms of processing, palmitoylated, but association with CD8B seems to be more important for the enrichment of CdD8A in lipid rafts. Post-translationally, phosphorylated in cytotoxic T-lymphocytes (CTLs) following activation.

The protein localises to the cell membrane. In terms of biological role, integral membrane glycoprotein that plays an essential role in the immune response and serves multiple functions in responses against both external and internal offenses. In T-cells, functions primarily as a coreceptor for MHC class I molecule:peptide complex. The antigens presented by class I peptides are derived from cytosolic proteins while class II derived from extracellular proteins. Interacts simultaneously with the T-cell receptor (TCR) and the MHC class I proteins presented by antigen presenting cells (APCs). In turn, recruits the Src kinase LCK to the vicinity of the TCR-CD3 complex. LCK then initiates different intracellular signaling pathways by phosphorylating various substrates ultimately leading to lymphokine production, motility, adhesion and activation of cytotoxic T-lymphocytes (CTLs). This mechanism enables CTLs to recognize and eliminate infected cells and tumor cells. In NK-cells, the presence of CD8A homodimers at the cell surface provides a survival mechanism allowing conjugation and lysis of multiple target cells. CD8A homodimer molecules also promote the survival and differentiation of activated lymphocytes into memory CD8 T-cells. The chain is T-cell surface glycoprotein CD8 alpha chain (Cd8a) from Mus musculus (Mouse).